The chain runs to 149 residues: D-aminoacyl-tRNA deacylase (149 aa).

A Gly-cisPro motif, important for rejection of L-amino acids motif is present at residues 137–138; sequence GP.

The protein belongs to the DTD family. Homodimer.

It is found in the cytoplasm. It carries out the reaction glycyl-tRNA(Ala) + H2O = tRNA(Ala) + glycine + H(+). It catalyses the reaction a D-aminoacyl-tRNA + H2O = a tRNA + a D-alpha-amino acid + H(+). An aminoacyl-tRNA editing enzyme that deacylates mischarged D-aminoacyl-tRNAs. Also deacylates mischarged glycyl-tRNA(Ala), protecting cells against glycine mischarging by AlaRS. Acts via tRNA-based rather than protein-based catalysis; rejects L-amino acids rather than detecting D-amino acids in the active site. By recycling D-aminoacyl-tRNA to D-amino acids and free tRNA molecules, this enzyme counteracts the toxicity associated with the formation of D-aminoacyl-tRNA entities in vivo and helps enforce protein L-homochirality. This chain is D-aminoacyl-tRNA deacylase, found in Clostridium botulinum (strain Loch Maree / Type A3).